Reading from the N-terminus, the 154-residue chain is MRCPTCKYNGTRVVDSRPADDGNSIRRRRECEKCGFRFTTFEKVEESPLIVVKKDGAREEFAREKVRRGLIRACEKRPVSAEQIEEIVNEVERELRNIGDSEIASDLIGEKVMNKLASLDEVAYVRFASVYRQFKDISVFVEELKDLMEKNKDR.

A zinc finger lies at 3 to 34 (CPTCKYNGTRVVDSRPADDGNSIRRRRECEKC). The 91-residue stretch at 49–139 (LIVVKKDGAR…VYRQFKDISV (91 aa)) folds into the ATP-cone domain.

The protein belongs to the NrdR family. Zn(2+) serves as cofactor.

Its function is as follows. Negatively regulates transcription of bacterial ribonucleotide reductase nrd genes and operons by binding to NrdR-boxes. The polypeptide is Transcriptional repressor NrdR (Listeria innocua serovar 6a (strain ATCC BAA-680 / CLIP 11262)).